The following is a 565-amino-acid chain: Probable alpha-L-arabinofuranosidase A (565 aa).

A signal peptide spans M1–A19. N-linked (GlcNAc...) asparagine glycosylation is found at N71, N91, N128, N303, N362, N486, and N501.

It belongs to the glycosyl hydrolase 51 family.

Its subcellular location is the secreted. It carries out the reaction Hydrolysis of terminal non-reducing alpha-L-arabinofuranoside residues in alpha-L-arabinosides.. Its pathway is glycan metabolism; L-arabinan degradation. Alpha-L-arabinofuranosidase involved in the degradation of arabinoxylan, a major component of plant hemicellulose. Acts only on small linear 1,5-alpha-linked L-arabinofuranosyl oligosaccharides. The chain is Probable alpha-L-arabinofuranosidase A (abfA) from Emericella nidulans (strain FGSC A4 / ATCC 38163 / CBS 112.46 / NRRL 194 / M139) (Aspergillus nidulans).